Consider the following 302-residue polypeptide: Pathogenicity locus probable regulatory protein HrpS (302 aa).

In terms of domain architecture, Sigma-54 factor interaction spans 9–237; it reads DDLDAERVPN…LKAAAKRHVL (229 aa). ATP is bound by residues 37–44 and 99–108; these read GETGTGKD and AQGGTLYLDE. A DNA-binding region (H-T-H motif) is located at residues 279–298; sequence IDAASLELDIPRRTLYRRIK.

Functionally, regulates the activation of the sigma factor HrpL which itself induces the expression of hprD as well as other hrp loci which are involved in plant pathogenicity, hrmA and avr genes. Probably interacts with sigma-54. The protein is Pathogenicity locus probable regulatory protein HrpS (hrpS) of Pseudomonas syringae pv. syringae.